A 517-amino-acid chain; its full sequence is Cell division cycle protein 73 (517 aa).

Residues 124 to 135 (SEPEAKKPRLDG) are compositionally biased toward basic and acidic residues. Disordered stretches follow at residues 124–159 (SEPE…SAAK) and 306–326 (GHHA…LAKP). Residues 315–324 (DAPPGRPPLA) show a composition bias toward pro residues.

This sequence belongs to the CDC73 family. As to quaternary structure, component of the PAF1 complex which consists of at least cdc-73, ctr-9, leo-1, pafo-1 and rtfo-1.

Its subcellular location is the nucleus. Component of the PAF1 complex which is a multifunctional complex involved in transcription initiation via genetic interactions with TATA-binding proteins, elongation and transcription-coupled histone modification. This chain is Cell division cycle protein 73, found in Caenorhabditis elegans.